The chain runs to 131 residues: Gem-associated protein 7 (131 aa).

At Met1 the chain carries N-acetylmethionine. The SUZ-C domain occupies 1-29 (MQTPVNIPVPVLRLPRGPDGFSRGFAPDG). A Phosphothreonine modification is found at Thr3. In terms of domain architecture, Sm spans 65–131 (RYLRSLLAMV…SDIISYTFKP (67 aa)).

Belongs to the gemin-7 family. Part of the core SMN complex that contains SMN1, GEMIN2/SIP1, DDX20/GEMIN3, GEMIN4, GEMIN5, GEMIN6, GEMIN7, GEMIN8 and STRAP/UNRIP. Part of the SMN-Sm complex that contains SMN1, GEMIN2/SIP1, DDX20/GEMIN3, GEMIN4, GEMIN5, GEMIN6, GEMIN7, GEMIN8, STRAP/UNRIP and the Sm proteins SNRPB, SNRPD1, SNRPD2, SNRPD3, SNRPE, SNRPF and SNRPG. Interacts with GEMIN6; the interaction is direct. Interacts with STRAP/UNRIP; the interaction is direct. Interacts with GEMIN8; the interaction is direct. Interacts with SNRPB, SNRPD2, SNRPD3 and SNRPE; the interaction is direct.

Its subcellular location is the nucleus. It is found in the nucleoplasm. The protein resides in the gem. The protein localises to the cytoplasm. Its function is as follows. The SMN complex catalyzes the assembly of small nuclear ribonucleoproteins (snRNPs), the building blocks of the spliceosome, and thereby plays an important role in the splicing of cellular pre-mRNAs. Most spliceosomal snRNPs contain a common set of Sm proteins SNRPB, SNRPD1, SNRPD2, SNRPD3, SNRPE, SNRPF and SNRPG that assemble in a heptameric protein ring on the Sm site of the small nuclear RNA to form the core snRNP (Sm core). In the cytosol, the Sm proteins SNRPD1, SNRPD2, SNRPE, SNRPF and SNRPG are trapped in an inactive 6S pICln-Sm complex by the chaperone CLNS1A that controls the assembly of the core snRNP. To assemble core snRNPs, the SMN complex accepts the trapped 5Sm proteins from CLNS1A forming an intermediate. Binding of snRNA inside 5Sm triggers eviction of the SMN complex, thereby allowing binding of SNRPD3 and SNRPB to complete assembly of the core snRNP. The sequence is that of Gem-associated protein 7 (GEMIN7) from Homo sapiens (Human).